Reading from the N-terminus, the 154-residue chain is Transcription antitermination protein NusB (154 aa).

Residues 132–154 (KDKQSPQSTPLDDSDKDESDQTN) form a disordered region. Residues 143–154 (DDSDKDESDQTN) are compositionally biased toward acidic residues.

This sequence belongs to the NusB family.

Its function is as follows. Involved in transcription antitermination. Required for transcription of ribosomal RNA (rRNA) genes. Binds specifically to the boxA antiterminator sequence of the ribosomal RNA (rrn) operons. The polypeptide is Transcription antitermination protein NusB (Bifidobacterium animalis subsp. lactis (strain AD011)).